Reading from the N-terminus, the 290-residue chain is Chloride intracellular channel exc-4 (290 aa).

Residues 37–57 (LFCQEFWMELYALYEIGVARV) traverse the membrane as a helical segment.

It belongs to the chloride channel CLIC family. In terms of assembly, monomer. In terms of tissue distribution, expressed in the secretory system, hypodermis, vulva, pharyngeal muscle, rectal gland, tubular rectal epithelium cells, and tubular neuronal support cells in the head and tail.

The protein localises to the cytoplasm. The protein resides in the membrane. Its function is as follows. May insert into membranes and form chloride ion channels. Involved in the formation of the excretory canal. Required to prevent cystic lumenal expansions in the excretory cell. Not required for formation of the initial tube, but is required for regulating the size of the tube lumen as it grows. This Caenorhabditis elegans protein is Chloride intracellular channel exc-4 (exc-4).